The primary structure comprises 146 residues: Hemoglobin subunit beta (146 aa).

Position 1 is an N-acetylvaline (V1). One can recognise a Globin domain in the interval 2–146 (HLTGEEKAAV…VANALAHKYH (145 aa)). T12 carries the post-translational modification Phosphothreonine. S44 carries the phosphoserine modification. K59 is subject to N6-acetyllysine. Residue H63 coordinates heme b. At K82 the chain carries N6-acetyllysine. Heme b is bound at residue H92. C93 carries the post-translational modification S-nitrosocysteine. An N6-acetyllysine modification is found at K144.

This sequence belongs to the globin family. As to quaternary structure, heterotetramer of two alpha chains and two beta chains. As to expression, red blood cells.

Functionally, involved in oxygen transport from the lung to the various peripheral tissues. This Lutra lutra (European river otter) protein is Hemoglobin subunit beta (HBB).